The sequence spans 463 residues: Fumarate hydratase class II (463 aa).

Residues 98 to 100 (SGT), 129 to 132 (HPND), 139 to 141 (SSN), and Thr-187 each bind substrate. Residues 121–141 (KKGGKSPVHPNDHVNKGQSSN) form a disordered region. His-188 serves as the catalytic Proton donor/acceptor. The active site involves Ser-318. Residues Ser-319 and 324 to 326 (KVN) contribute to the substrate site.

Belongs to the class-II fumarase/aspartase family. Fumarase subfamily. In terms of assembly, homotetramer.

Its subcellular location is the cytoplasm. The enzyme catalyses (S)-malate = fumarate + H2O. It participates in carbohydrate metabolism; tricarboxylic acid cycle; (S)-malate from fumarate: step 1/1. Involved in the TCA cycle. Catalyzes the stereospecific interconversion of fumarate to L-malate. This chain is Fumarate hydratase class II, found in Rickettsia conorii (strain ATCC VR-613 / Malish 7).